The following is a 251-amino-acid chain: Triosephosphate isomerase (251 aa).

9–11 (NWK) lines the substrate pocket. Residue His95 is the Electrophile of the active site. The active-site Proton acceptor is Glu167. Substrate contacts are provided by residues Gly173, Ser213, and 234–235 (GG). Residue Ser213 is modified to Phosphoserine.

The protein belongs to the triosephosphate isomerase family. Homodimer.

It localises to the cytoplasm. The enzyme catalyses D-glyceraldehyde 3-phosphate = dihydroxyacetone phosphate. It participates in carbohydrate biosynthesis; gluconeogenesis. The protein operates within carbohydrate degradation; glycolysis; D-glyceraldehyde 3-phosphate from glycerone phosphate: step 1/1. In terms of biological role, involved in the gluconeogenesis. Catalyzes stereospecifically the conversion of dihydroxyacetone phosphate (DHAP) to D-glyceraldehyde-3-phosphate (G3P). This chain is Triosephosphate isomerase, found in Halalkalibacterium halodurans (strain ATCC BAA-125 / DSM 18197 / FERM 7344 / JCM 9153 / C-125) (Bacillus halodurans).